The primary structure comprises 132 residues: MTNDTVSDMLTRVRNANLAKHQVVQVPATKMTKSIAHVLLEEGFIESIEEVGLDINRQLLLSLKYKGREREPVINALKRISRPGLRVYANRKELPRVLGGLGIAVISTSKGVLTDTKARTQGLGGEVLCYIW.

It belongs to the universal ribosomal protein uS8 family. In terms of assembly, part of the 30S ribosomal subunit.

The protein resides in the plastid. The protein localises to the chloroplast. Its function is as follows. One of the primary rRNA binding proteins, it binds directly to 16S rRNA central domain where it helps coordinate assembly of the platform of the 30S subunit. This chain is Small ribosomal subunit protein uS8c (rps8), found in Guillardia theta (Cryptophyte).